The following is a 318-amino-acid chain: MTTVPVTDIQNDLITEFSEDNYPSNKNYEITLRQMSILTHVNNVVDREHNAAVVSSPEEISSQLNEDLFPDDDSPATIIERVQPHTTIIDDTPPPTFRRELLISEQRQQREKRFNITVSKNAEAIMESRSMISSMPTQTPSLGVVYDKDKRIQMLEDEVVNLRNQRSNTKSSDNLDNFTRILFGKTPYKSTEVNKRIAIVNYANLNGSPLSVEDLDVCSEDEIDRIYKTIKQYHESRKRKIIVTNVIIIVINIIEQALLKLGFEEIKGLSTDITSEIIDVEIGDDCDAVASKLGIGNSPVLNIVLFILKIFVKRIKII.

Residues 145-172 (VYDKDKRIQMLEDEVVNLRNQRSNTKSS) adopt a coiled-coil conformation.

Belongs to the orthopoxvirus OPG137 family. Homomultimer. Interacts with OPG160. Post-translationally, phosphorylated by a OPG054-independent mechanism.

The protein localises to the host cytoplasm. In terms of biological role, required for viral crescent formation early during virus morphogenesis. The sequence is that of Protein OPG137 (OPG137) from Vaccinia virus (strain Ankara) (VACV).